We begin with the raw amino-acid sequence, 480 residues long: Salicylate hydroxylase asL1 (480 aa).

Residues 17-37 (PMEIAIVGGGIVGVILAIGLT) traverse the membrane as a helical segment. Positions 47 and 60 each coordinate FAD. The N-linked (GlcNAc...) asparagine glycan is linked to Asn87. Arg131 serves as a coordination point for FAD. A glycan (N-linked (GlcNAc...) asparagine) is linked at Asn168. Residues Arg213 and Tyr246 contribute to the active site. N-linked (GlcNAc...) asparagine glycosylation occurs at Asn250. Residues Asp329 and Ala342 each coordinate FAD. Residues Asn400 and Asn464 are each glycosylated (N-linked (GlcNAc...) asparagine).

The protein belongs to the paxM FAD-dependent monooxygenase family. FAD serves as cofactor.

Its subcellular location is the membrane. Its pathway is secondary metabolite biosynthesis; terpenoid biosynthesis. In terms of biological role, salicylate hydroxylase; part of the gene cluster that mediates the biosynthesis of xenovulene A, an unusual meroterpenoid that has potent inhibitory effects on the human gamma-aminobutyrate A (GABAA) benzodiazepine receptor. The first step of xenovulene A biosynthesis is the biosynthesis of 3-methylorcinaldehyde performed by the non-reducing polyketide synthase aspks1. The salicylate hydroxylase asL1 then catalyzes the oxidative dearomatization of 3-methylorcinaldehyde to yield a dearomatized hydroxycyclohexadione. The 2-oxoglutarate-dependent dioxygenase asL3 further catalyzes the oxidative ring expansion to provide the first tropolone metabolite. The cytochrome P450 monooxygenase asR2 allows the synthesis of tropolone hemiacetal. In parallel, a previously unrecognised class of terpene cyclase, asR6, produces alpha-humulene from farnesylpyrophosphate (FPP). The putative Diels-Alderase asR5 probably catalyzes the formation of the tropolone-humulene skeleton by linking humulene and the polyketide moiety. Oxidative-ring contractions catalyzed by asL4 and asL6 then processively remove carbon atoms from the polyketide to yield xenovulene A. In Sarocladium schorii (Acremonium strictum (strain IMI 501407)), this protein is Salicylate hydroxylase asL1.